Here is a 210-residue protein sequence, read N- to C-terminus: MTLAKDIASHLLKIQAVYLKPEEPFTWASGIKSPIYTDNRVTLAYPETRTLIENGFVDAIKEAFPEVEVIAGTATAGIPHGAIIADKMNLPFAYIRSKPKDHGAGNQIEGRVAQGQKMVVVEDLISTGGSVLEAVAAAKREGADVLGVVAIFSYQLPKADKNFADAGVKLVTLSNYSELIHLAQEEGYITPEGLDLLKRFKEDQENWQEG.

Residues Arg-96, Lys-100, His-102, and 122 to 130 each bind 5-phospho-alpha-D-ribose 1-diphosphate; that span reads EDLISTGGS. Residue Ser-126 coordinates orotate.

The protein belongs to the purine/pyrimidine phosphoribosyltransferase family. PyrE subfamily. As to quaternary structure, homodimer. Mg(2+) serves as cofactor.

It carries out the reaction orotidine 5'-phosphate + diphosphate = orotate + 5-phospho-alpha-D-ribose 1-diphosphate. It participates in pyrimidine metabolism; UMP biosynthesis via de novo pathway; UMP from orotate: step 1/2. Functionally, catalyzes the transfer of a ribosyl phosphate group from 5-phosphoribose 1-diphosphate to orotate, leading to the formation of orotidine monophosphate (OMP). In Streptococcus pneumoniae serotype 19F (strain G54), this protein is Orotate phosphoribosyltransferase (pyrE).